Here is a 125-residue protein sequence, read N- to C-terminus: MAISKDDILEAVGSMTVMELNDLVKAFEEKFGVSAAALAVAAPGAGGAAAPAAEEKTEFDVILTAAGEKKVEVIKVVRAATGLGLKEAKDVVDGAPKAVKEGIAKADAEALKKQLEDAGAKVEIK.

This sequence belongs to the bacterial ribosomal protein bL12 family. As to quaternary structure, homodimer. Part of the ribosomal stalk of the 50S ribosomal subunit. Forms a multimeric L10(L12)X complex, where L10 forms an elongated spine to which 2 to 4 L12 dimers bind in a sequential fashion. Binds GTP-bound translation factors.

Its function is as follows. Forms part of the ribosomal stalk which helps the ribosome interact with GTP-bound translation factors. Is thus essential for accurate translation. In Azoarcus sp. (strain BH72), this protein is Large ribosomal subunit protein bL12.